Consider the following 1069-residue polypeptide: Protocadherin-8 (1069 aa).

The signal sequence occupies residues 1–29; that stretch reads MSPVKRWGSPCLFPLQLFSLCWVLSVAQS. Cadherin domains lie at 30-135, 136-245, 247-354, 393-497, 498-609, and 615-721; these read KTVR…APRF, PRAQ…SPAF, QGAV…APDI, QETG…APLF, TKPV…SPVL, and ANGS…VPAS. Residues 30–747 are Extracellular-facing; the sequence is KTVRYSTFEE…SGPSLQWDTP (718 aa). The N-linked (GlcNAc...) asparagine glycan is linked to asparagine 616. The interval 719–738 is disordered; the sequence is PASAGSPEHFRPPGSRLAPS. A helical membrane pass occupies residues 748-768; the sequence is LIVIIVLAGSCTLLLAAIIAI. Residues 769-1069 are Cytoplasmic-facing; that stretch reads ATTCNRRKKE…SPKKGTNENV (301 aa). Disordered stretches follow at residues 777–859, 905–927, and 1031–1069; these read KEVR…TGES, REAEKFSGKDSGKGDSDFNDSDS, and LSPPRPGRLPDLQEIGVPLYESPPGGRYVSPKKGTNENV. 2 stretches are compositionally biased toward basic and acidic residues: residues 780–790 and 905–920; these read RKGGALREERP and REAEKFSGKDSGKGDS. Serine 1052 is modified (phosphoserine).

In terms of assembly, the N-terminal extracellular domain forms homophilic interactions; these interactions activate p38 MAPK via TAOK2 and trigger endocytosis. Interacts with CDH2; this interaction may lead to CDH2 cointernalization. Interacts with CDH11. Interacts with TAOK2. In terms of tissue distribution, enriched in brain relative to peripheral tissues, with low expression in the testis. Expressed in hippocampal neurons (at protein level).

It is found in the cell membrane. It localises to the cell projection. The protein resides in the dendrite. Its subcellular location is the presynaptic cell membrane. The protein localises to the postsynaptic cell membrane. Its function is as follows. Calcium-dependent cell-adhesion protein. May play a role in activity-induced synaptic reorganization underlying long term memory. Could be involved in CDH2 internalization through TAOK2/p38 MAPK pathway. In hippocampal neurons, may play a role in the down-regulation of dendritic spines, maybe through its action on CDH2 endocytosis. In Rattus norvegicus (Rat), this protein is Protocadherin-8 (Pcdh8).